A 143-amino-acid polypeptide reads, in one-letter code: Transcriptional regulator MraZ (143 aa).

SpoVT-AbrB domains follow at residues 5 to 47 (EFRH…PMNE) and 76 to 119 (ASEC…SQEK).

The protein belongs to the MraZ family. As to quaternary structure, forms oligomers.

Its subcellular location is the cytoplasm. It is found in the nucleoid. This is Transcriptional regulator MraZ from Natranaerobius thermophilus (strain ATCC BAA-1301 / DSM 18059 / JW/NM-WN-LF).